The sequence spans 311 residues: Porphobilinogen deaminase (311 aa).

An S-(dipyrrolylmethanemethyl)cysteine modification is found at Cys242.

This sequence belongs to the HMBS family. In terms of assembly, monomer. The cofactor is dipyrromethane.

The enzyme catalyses 4 porphobilinogen + H2O = hydroxymethylbilane + 4 NH4(+). The protein operates within porphyrin-containing compound metabolism; protoporphyrin-IX biosynthesis; coproporphyrinogen-III from 5-aminolevulinate: step 2/4. Its function is as follows. Tetrapolymerization of the monopyrrole PBG into the hydroxymethylbilane pre-uroporphyrinogen in several discrete steps. This chain is Porphobilinogen deaminase, found in Hahella chejuensis (strain KCTC 2396).